The primary structure comprises 62 residues: UPF0434 protein Rpic_2808 (62 aa).

This sequence belongs to the UPF0434 family.

The sequence is that of UPF0434 protein Rpic_2808 from Ralstonia pickettii (strain 12J).